A 217-amino-acid polypeptide reads, in one-letter code: uncharacterized protein (217 aa).

The signal sequence occupies residues 1–32; that stretch reads MPITKATPLFLRYRLKGFVFLTLLLVQGVFTA. A lipid anchor (N-palmitoyl cysteine) is attached at cysteine 33. Cysteine 33 is lipidated: S-diacylglycerol cysteine.

This sequence belongs to the MG067/MG068/MG395 family.

Its subcellular location is the cell membrane. This is an uncharacterized protein from Mycoplasma pneumoniae (strain ATCC 29342 / M129 / Subtype 1) (Mycoplasmoides pneumoniae).